We begin with the raw amino-acid sequence, 352 residues long: Histidine biosynthesis bifunctional protein HisB (352 aa).

The tract at residues 1–164 (MSQKILFIDR…EIENEILSSF (164 aa)) is histidinol-phosphatase. Aspartate 9 functions as the Nucleophile in the catalytic mechanism. Mg(2+) is bound by residues aspartate 9 and aspartate 11. Catalysis depends on aspartate 11, which acts as the Proton donor. Cysteine 93, histidine 95, cysteine 101, and cysteine 103 together coordinate Zn(2+). Aspartate 130 contributes to the Mg(2+) binding site. An imidazoleglycerol-phosphate dehydratase region spans residues 165–352 (RSASYQRTTK…ENLASSKGVI (188 aa)).

This sequence in the N-terminal section; belongs to the histidinol-phosphatase family. In the C-terminal section; belongs to the imidazoleglycerol-phosphate dehydratase family. Mg(2+) is required as a cofactor. Zn(2+) serves as cofactor.

The protein localises to the cytoplasm. The catalysed reaction is D-erythro-1-(imidazol-4-yl)glycerol 3-phosphate = 3-(imidazol-4-yl)-2-oxopropyl phosphate + H2O. It catalyses the reaction L-histidinol phosphate + H2O = L-histidinol + phosphate. The protein operates within amino-acid biosynthesis; L-histidine biosynthesis; L-histidine from 5-phospho-alpha-D-ribose 1-diphosphate: step 6/9. Its pathway is amino-acid biosynthesis; L-histidine biosynthesis; L-histidine from 5-phospho-alpha-D-ribose 1-diphosphate: step 8/9. The chain is Histidine biosynthesis bifunctional protein HisB from Campylobacter jejuni subsp. jejuni serotype O:2 (strain ATCC 700819 / NCTC 11168).